A 300-amino-acid chain; its full sequence is MTFTEYMGFFQDKYELICMADEERDNFCLDVESSWNITNMVLLDEATWPTYTNKCYYDVSGITEQVWINMRLNINIIPANNYTASENINITIASPGPITTICPQAITISQNTTLTCQQMAIAYEIPTAGIRNLKIISIAIGVAAVNGTNPTTSNTTATFVSAPTTTVTGTTSECCEWHTVFSGDTCQLIEAEYGITLEKFIALNTYVNSTCGNIWPDYAYCVSGIATANSSTSTTAITATSTSPPIPVTTSGTLTTATTSGTITTPAPAQTGMVSGCTTFYEAISGDGLLRDRHIVRHHA.

Residues 176–222 (EWHTVFSGDTCQLIEAEYGITLEKFIALNTYVNSTCGNIWPDYAYCV) form the LysM domain.

The protein belongs to the secreted LysM effector family.

Non-secreted LysM effector that might be involved in manipulation of host defenses for successful infection. The sequence is that of Non-secreted LysM effector LysM16 from Penicillium expansum (Blue mold rot fungus).